A 328-amino-acid polypeptide reads, in one-letter code: D-cysteine desulfhydrase (328 aa).

Position 51 is an N6-(pyridoxal phosphate)lysine (lysine 51).

This sequence belongs to the ACC deaminase/D-cysteine desulfhydrase family. In terms of assembly, homodimer. It depends on pyridoxal 5'-phosphate as a cofactor.

The catalysed reaction is D-cysteine + H2O = hydrogen sulfide + pyruvate + NH4(+) + H(+). Its function is as follows. Catalyzes the alpha,beta-elimination reaction of D-cysteine and of several D-cysteine derivatives. It could be a defense mechanism against D-cysteine. This chain is D-cysteine desulfhydrase, found in Escherichia coli O7:K1 (strain IAI39 / ExPEC).